The chain runs to 942 residues: Sucrose synthase 6 (942 aa).

Residues 281 to 759 (TVFNVVIFSV…GLKRIYECYT (479 aa)) are GT-B glycosyltransferase. Residues 830-862 (TTNLGAGSKQKEVTETEKTKQKSKDGQEQHDVK) form a disordered region. Over residues 838–862 (KQKEVTETEKTKQKSKDGQEQHDVK) the composition is skewed to basic and acidic residues.

This sequence belongs to the glycosyltransferase 1 family. Plant sucrose synthase subfamily. In terms of tissue distribution, detected in the whole plant but more precisely confined to the vasculature in cotyledons, leaves, petals, anthers and roots.

The protein localises to the secreted. It localises to the cell wall. The enzyme catalyses an NDP-alpha-D-glucose + D-fructose = a ribonucleoside 5'-diphosphate + sucrose + H(+). Sucrose-cleaving enzyme that provides UDP-glucose and fructose for various metabolic pathways. Functions in callose synthesis at the site of phloem sieve elements. This Arabidopsis thaliana (Mouse-ear cress) protein is Sucrose synthase 6 (SUS6).